The sequence spans 188 residues: Elongation factor P-like protein (188 aa).

The protein belongs to the elongation factor P family.

The chain is Elongation factor P-like protein from Vibrio parahaemolyticus serotype O3:K6 (strain RIMD 2210633).